The sequence spans 279 residues: Ribosomal RNA small subunit methyltransferase I (279 aa).

It belongs to the methyltransferase superfamily. RsmI family.

The protein resides in the cytoplasm. It carries out the reaction cytidine(1402) in 16S rRNA + S-adenosyl-L-methionine = 2'-O-methylcytidine(1402) in 16S rRNA + S-adenosyl-L-homocysteine + H(+). Catalyzes the 2'-O-methylation of the ribose of cytidine 1402 (C1402) in 16S rRNA. This Synechocystis sp. (strain ATCC 27184 / PCC 6803 / Kazusa) protein is Ribosomal RNA small subunit methyltransferase I.